A 382-amino-acid polypeptide reads, in one-letter code: Pyrimidine monooxygenase RutA (382 aa).

FMN-binding positions include 68 to 69, N134, E143, 159 to 160, and S209; these read IK and RY.

It belongs to the NtaA/SnaA/DszA monooxygenase family. RutA subfamily.

It carries out the reaction uracil + FMNH2 + NADH + O2 = (Z)-3-ureidoacrylate + FMN + NAD(+) + H2O + H(+). The enzyme catalyses thymine + FMNH2 + NADH + O2 = (Z)-2-methylureidoacrylate + FMN + NAD(+) + H2O + H(+). Catalyzes the pyrimidine ring opening between N-3 and C-4 by an unusual flavin hydroperoxide-catalyzed mechanism, adding oxygen atoms in the process to yield ureidoacrylate peracid, that immediately reacts with FMN forming ureidoacrylate and FMN-N(5)-oxide. The FMN-N(5)-oxide reacts spontaneously with NADH to produce FMN. Requires the flavin reductase RutF to regenerate FMN in vivo. In Escherichia coli O45:K1 (strain S88 / ExPEC), this protein is Pyrimidine monooxygenase RutA.